Reading from the N-terminus, the 142-residue chain is Heat shock protein HSP.16.4 (142 aa).

The sHSP domain occupies 27–142 (NLFNDLKSNL…KEIKTSIPIE (116 aa)).

It belongs to the small heat shock protein (HSP20) family.

It localises to the cytoplasm. The sequence is that of Heat shock protein HSP.16.4 from Streptococcus thermophilus.